The sequence spans 354 residues: Peptide chain release factor 1 (354 aa).

Residue Gln-230 is modified to N5-methylglutamine.

Belongs to the prokaryotic/mitochondrial release factor family. Post-translationally, methylated by PrmC. Methylation increases the termination efficiency of RF1.

The protein resides in the cytoplasm. Peptide chain release factor 1 directs the termination of translation in response to the peptide chain termination codons UAG and UAA. The protein is Peptide chain release factor 1 of Leptospira interrogans serogroup Icterohaemorrhagiae serovar copenhageni (strain Fiocruz L1-130).